The sequence spans 463 residues: tRNA-2-methylthio-N(6)-dimethylallyladenosine synthase (463 aa).

The region spanning 5–125 (RKLHIKSYGC…LPQLLAKAEQ (121 aa)) is the MTTase N-terminal domain. [4Fe-4S] cluster is bound by residues cysteine 14, cysteine 50, cysteine 88, cysteine 166, cysteine 170, and cysteine 173. Residues 152 to 384 (RARGISAFVT…QQLIDQQQSA (233 aa)) form the Radical SAM core domain. The TRAM domain occupies 387–449 (KAAIGRTVEV…RYSLLGELAS (63 aa)).

Belongs to the methylthiotransferase family. MiaB subfamily. In terms of assembly, monomer. [4Fe-4S] cluster serves as cofactor.

The protein resides in the cytoplasm. It catalyses the reaction N(6)-dimethylallyladenosine(37) in tRNA + (sulfur carrier)-SH + AH2 + 2 S-adenosyl-L-methionine = 2-methylsulfanyl-N(6)-dimethylallyladenosine(37) in tRNA + (sulfur carrier)-H + 5'-deoxyadenosine + L-methionine + A + S-adenosyl-L-homocysteine + 2 H(+). Functionally, catalyzes the methylthiolation of N6-(dimethylallyl)adenosine (i(6)A), leading to the formation of 2-methylthio-N6-(dimethylallyl)adenosine (ms(2)i(6)A) at position 37 in tRNAs that read codons beginning with uridine. This Rhodopseudomonas palustris (strain TIE-1) protein is tRNA-2-methylthio-N(6)-dimethylallyladenosine synthase.